The primary structure comprises 86 residues: MNFQPLGKRVLVERVEETKTTASGIIIPDNAKEKPLSGEVKAVGAEAEGVKVGEKVVFAKYAGTEVNLDDKTYLVLNIDDILGVIK.

Belongs to the GroES chaperonin family. As to quaternary structure, heptamer of 7 subunits arranged in a ring. Interacts with the chaperonin GroEL.

Its subcellular location is the cytoplasm. In terms of biological role, together with the chaperonin GroEL, plays an essential role in assisting protein folding. The GroEL-GroES system forms a nano-cage that allows encapsulation of the non-native substrate proteins and provides a physical environment optimized to promote and accelerate protein folding. GroES binds to the apical surface of the GroEL ring, thereby capping the opening of the GroEL channel. The chain is Co-chaperonin GroES from Campylobacter concisus (strain 13826).